The primary structure comprises 260 residues: Hydroxyethylthiazole kinase 2 (260 aa).

Position 40 (M40) interacts with substrate. Residues R116 and T161 each coordinate ATP. A188 is a binding site for substrate.

This sequence belongs to the Thz kinase family. Mg(2+) is required as a cofactor.

It carries out the reaction 5-(2-hydroxyethyl)-4-methylthiazole + ATP = 4-methyl-5-(2-phosphooxyethyl)-thiazole + ADP + H(+). It functions in the pathway cofactor biosynthesis; thiamine diphosphate biosynthesis; 4-methyl-5-(2-phosphoethyl)-thiazole from 5-(2-hydroxyethyl)-4-methylthiazole: step 1/1. Functionally, catalyzes the phosphorylation of the hydroxyl group of 4-methyl-5-beta-hydroxyethylthiazole (THZ). The sequence is that of Hydroxyethylthiazole kinase 2 from Oceanobacillus iheyensis (strain DSM 14371 / CIP 107618 / JCM 11309 / KCTC 3954 / HTE831).